The sequence spans 233 residues: Small ribosomal subunit protein uS3 (233 aa).

The KH type-2 domain maps to 39–107 (VRQFLASELT…PSQINIAEVR (69 aa)).

This sequence belongs to the universal ribosomal protein uS3 family. Part of the 30S ribosomal subunit. Forms a tight complex with proteins S10 and S14.

Its function is as follows. Binds the lower part of the 30S subunit head. Binds mRNA in the 70S ribosome, positioning it for translation. The chain is Small ribosomal subunit protein uS3 from Baumannia cicadellinicola subsp. Homalodisca coagulata.